A 214-amino-acid chain; its full sequence is Small ribosomal subunit protein uS5 (214 aa).

The S5 DRBM domain occupies Leu54–Val117.

The protein belongs to the universal ribosomal protein uS5 family. In terms of assembly, part of the 30S ribosomal subunit. Contacts protein S4.

Functionally, with S4 and S12 plays an important role in translational accuracy. This is Small ribosomal subunit protein uS5 from Saccharolobus solfataricus (strain ATCC 35092 / DSM 1617 / JCM 11322 / P2) (Sulfolobus solfataricus).